A 380-amino-acid polypeptide reads, in one-letter code: Queuine tRNA-ribosyltransferase (380 aa).

The active-site Proton acceptor is D95. Substrate-binding positions include 95–99 (DSGGF), D149, Q192, and G219. The tract at residues 250–256 (GVGSADA) is RNA binding. D269 serves as the catalytic Nucleophile. Residues 274–278 (TRIAR) form an RNA binding; important for wobble base 34 recognition region. Residues C307, C309, C312, and H338 each coordinate Zn(2+).

Belongs to the queuine tRNA-ribosyltransferase family. In terms of assembly, homodimer. Within each dimer, one monomer is responsible for RNA recognition and catalysis, while the other monomer binds to the replacement base PreQ1. The cofactor is Zn(2+).

It carries out the reaction 7-aminomethyl-7-carbaguanine + guanosine(34) in tRNA = 7-aminomethyl-7-carbaguanosine(34) in tRNA + guanine. The protein operates within tRNA modification; tRNA-queuosine biosynthesis. Functionally, catalyzes the base-exchange of a guanine (G) residue with the queuine precursor 7-aminomethyl-7-deazaguanine (PreQ1) at position 34 (anticodon wobble position) in tRNAs with GU(N) anticodons (tRNA-Asp, -Asn, -His and -Tyr). Catalysis occurs through a double-displacement mechanism. The nucleophile active site attacks the C1' of nucleotide 34 to detach the guanine base from the RNA, forming a covalent enzyme-RNA intermediate. The proton acceptor active site deprotonates the incoming PreQ1, allowing a nucleophilic attack on the C1' of the ribose to form the product. After dissociation, two additional enzymatic reactions on the tRNA convert PreQ1 to queuine (Q), resulting in the hypermodified nucleoside queuosine (7-(((4,5-cis-dihydroxy-2-cyclopenten-1-yl)amino)methyl)-7-deazaguanosine). The polypeptide is Queuine tRNA-ribosyltransferase (Lactiplantibacillus plantarum (strain ATCC BAA-793 / NCIMB 8826 / WCFS1) (Lactobacillus plantarum)).